We begin with the raw amino-acid sequence, 78 residues long: Conotoxin 5 (78 aa).

A signal peptide spans 1 to 22; it reads MKLTCMMIVTVLFLTAWIFITA. Residues 23 to 49 constitute a propeptide that is removed on maturation; it reads DNSRNGIENLPRMRRHEMKNPKASKLN. Intrachain disulfides connect Cys53/Cys69, Cys60/Cys73, and Cys68/Cys77.

This sequence belongs to the conotoxin O1 superfamily. Expressed by the venom duct.

Its subcellular location is the secreted. This is Conotoxin 5 from Conus imperialis (Imperial cone).